A 201-amino-acid chain; its full sequence is Membrane protein UL120 (201 aa).

The first 25 residues, Met-1 to Ala-25, serve as a signal peptide directing secretion. Residues Thr-26–Ala-170 lie on the Extracellular side of the membrane. Asn-47, Asn-50, Asn-56, Asn-85, Asn-96, Asn-114, Asn-123, and Asn-138 each carry an N-linked (GlcNAc...) asparagine; by host glycan. Residues Phe-171 to Ile-191 traverse the membrane as a helical segment. Over Trp-192–Arg-201 the chain is Cytoplasmic.

The protein belongs to the HHV-5 UL120 protein family.

The protein resides in the host membrane. The sequence is that of Membrane protein UL120 (UL120) from Human cytomegalovirus (strain Merlin) (HHV-5).